The chain runs to 362 residues: 3-dehydroquinate synthase (362 aa).

NAD(+) contacts are provided by residues 71–76 (DGEQYK), 105–109 (GVIGD), 129–130 (TT), lysine 142, lysine 151, and 169–172 (CLKT). Zn(2+)-binding residues include glutamate 184, histidine 247, and histidine 264.

Belongs to the sugar phosphate cyclases superfamily. Dehydroquinate synthase family. It depends on NAD(+) as a cofactor. Co(2+) serves as cofactor. Requires Zn(2+) as cofactor.

It is found in the cytoplasm. The catalysed reaction is 7-phospho-2-dehydro-3-deoxy-D-arabino-heptonate = 3-dehydroquinate + phosphate. It participates in metabolic intermediate biosynthesis; chorismate biosynthesis; chorismate from D-erythrose 4-phosphate and phosphoenolpyruvate: step 2/7. Its function is as follows. Catalyzes the conversion of 3-deoxy-D-arabino-heptulosonate 7-phosphate (DAHP) to dehydroquinate (DHQ). The sequence is that of 3-dehydroquinate synthase from Salmonella typhi.